We begin with the raw amino-acid sequence, 305 residues long: Phospho-N-acetylmuramoyl-pentapeptide-transferase (305 aa).

9 helical membrane-spanning segments follow: residues 1 to 21 (MLMV…RASK), 46 to 66 (AGGV…YLSG), 73 to 93 (ELLI…DDWL), 113 to 133 (FPLQ…LASH), 139 to 159 (LGPV…VNAF), 174 to 194 (IIVL…VAVL), 207 to 227 (VFMG…AYIL), 233 to 253 (LLPI…IQVI), and 282 to 302 (VTIR…WLLG).

Belongs to the glycosyltransferase 4 family. MraY subfamily. Requires Mg(2+) as cofactor.

It localises to the cell membrane. It catalyses the reaction UDP-N-acetyl-alpha-D-muramoyl-L-alanyl-gamma-D-glutamyl-meso-2,6-diaminopimeloyl-D-alanyl-D-alanine + di-trans,octa-cis-undecaprenyl phosphate = di-trans,octa-cis-undecaprenyl diphospho-N-acetyl-alpha-D-muramoyl-L-alanyl-D-glutamyl-meso-2,6-diaminopimeloyl-D-alanyl-D-alanine + UMP. It participates in cell wall biogenesis; peptidoglycan biosynthesis. Catalyzes the initial step of the lipid cycle reactions in the biosynthesis of the cell wall peptidoglycan: transfers peptidoglycan precursor phospho-MurNAc-pentapeptide from UDP-MurNAc-pentapeptide onto the lipid carrier undecaprenyl phosphate, yielding undecaprenyl-pyrophosphoryl-MurNAc-pentapeptide, known as lipid I. The sequence is that of Phospho-N-acetylmuramoyl-pentapeptide-transferase from Deinococcus deserti (strain DSM 17065 / CIP 109153 / LMG 22923 / VCD115).